Reading from the N-terminus, the 214-residue chain is Small ribosomal subunit protein eS6 (214 aa).

This sequence belongs to the eukaryotic ribosomal protein eS6 family.

The polypeptide is Small ribosomal subunit protein eS6 (rps6e) (Saccharolobus islandicus (strain Y.G.57.14 / Yellowstone #1) (Sulfolobus islandicus)).